A 354-amino-acid polypeptide reads, in one-letter code: Histidinol-phosphate aminotransferase 1 (354 aa).

Lys-209 is subject to N6-(pyridoxal phosphate)lysine.

This sequence belongs to the class-II pyridoxal-phosphate-dependent aminotransferase family. Histidinol-phosphate aminotransferase subfamily. In terms of assembly, homodimer. The cofactor is pyridoxal 5'-phosphate.

The catalysed reaction is L-histidinol phosphate + 2-oxoglutarate = 3-(imidazol-4-yl)-2-oxopropyl phosphate + L-glutamate. Its pathway is amino-acid biosynthesis; L-histidine biosynthesis; L-histidine from 5-phospho-alpha-D-ribose 1-diphosphate: step 7/9. The chain is Histidinol-phosphate aminotransferase 1 (hisC1) from Oceanobacillus iheyensis (strain DSM 14371 / CIP 107618 / JCM 11309 / KCTC 3954 / HTE831).